The primary structure comprises 368 residues: tRNA-specific 2-thiouridylase MnmA (368 aa).

ATP contacts are provided by residues 11–18 (GMSGGVDS) and Met37. The tract at residues 97–99 (NPD) is interaction with target base in tRNA. The active-site Nucleophile is the Cys102. Cys102 and Cys199 are oxidised to a cystine. Gly127 contacts ATP. Positions 149-151 (KDQ) are interaction with tRNA. Cys199 acts as the Cysteine persulfide intermediate in catalysis. Positions 311-312 (RY) are interaction with tRNA.

The protein belongs to the MnmA/TRMU family. As to quaternary structure, interacts with TusE.

The protein localises to the cytoplasm. It catalyses the reaction S-sulfanyl-L-cysteinyl-[protein] + uridine(34) in tRNA + AH2 + ATP = 2-thiouridine(34) in tRNA + L-cysteinyl-[protein] + A + AMP + diphosphate + H(+). Its function is as follows. Catalyzes the 2-thiolation of uridine at the wobble position (U34) of tRNA(Lys), tRNA(Glu) and tRNA(Gln), leading to the formation of s(2)U34, the first step of tRNA-mnm(5)s(2)U34 synthesis. Sulfur is provided by IscS, via a sulfur-relay system. Binds ATP and its substrate tRNAs. The chain is tRNA-specific 2-thiouridylase MnmA from Salmonella typhimurium (strain LT2 / SGSC1412 / ATCC 700720).